Consider the following 180-residue polypeptide: NAD(P)H-quinone oxidoreductase subunit I, chloroplastic (180 aa).

2 4Fe-4S ferredoxin-type domains span residues 55 to 84 (GRIH…VHWR) and 95 to 124 (LNYS…MTEE). The [4Fe-4S] cluster site is built by Cys-64, Cys-67, Cys-70, Cys-74, Cys-104, Cys-107, Cys-110, and Cys-114.

This sequence belongs to the complex I 23 kDa subunit family. In terms of assembly, NDH is composed of at least 16 different subunits, 5 of which are encoded in the nucleus. [4Fe-4S] cluster is required as a cofactor.

The protein resides in the plastid. Its subcellular location is the chloroplast thylakoid membrane. It catalyses the reaction a plastoquinone + NADH + (n+1) H(+)(in) = a plastoquinol + NAD(+) + n H(+)(out). It carries out the reaction a plastoquinone + NADPH + (n+1) H(+)(in) = a plastoquinol + NADP(+) + n H(+)(out). Its function is as follows. NDH shuttles electrons from NAD(P)H:plastoquinone, via FMN and iron-sulfur (Fe-S) centers, to quinones in the photosynthetic chain and possibly in a chloroplast respiratory chain. The immediate electron acceptor for the enzyme in this species is believed to be plastoquinone. Couples the redox reaction to proton translocation, and thus conserves the redox energy in a proton gradient. The sequence is that of NAD(P)H-quinone oxidoreductase subunit I, chloroplastic from Calycanthus floridus var. glaucus (Eastern sweetshrub).